The sequence spans 333 residues: Glycerol-3-phosphate dehydrogenase [NAD(P)+] (333 aa).

NADPH is bound by residues Trp-11, Arg-30, and Lys-105. 3 residues coordinate sn-glycerol 3-phosphate: Lys-105, Gly-133, and Ser-135. Ala-137 contributes to the NADPH binding site. 5 residues coordinate sn-glycerol 3-phosphate: Lys-188, Asp-241, Ser-251, Arg-252, and Asn-253. Residue Lys-188 is the Proton acceptor of the active site. Residue Arg-252 coordinates NADPH. NADPH is bound by residues Val-276 and Glu-278.

It belongs to the NAD-dependent glycerol-3-phosphate dehydrogenase family.

It is found in the cytoplasm. The catalysed reaction is sn-glycerol 3-phosphate + NAD(+) = dihydroxyacetone phosphate + NADH + H(+). It carries out the reaction sn-glycerol 3-phosphate + NADP(+) = dihydroxyacetone phosphate + NADPH + H(+). It functions in the pathway membrane lipid metabolism; glycerophospholipid metabolism. In terms of biological role, catalyzes the reduction of the glycolytic intermediate dihydroxyacetone phosphate (DHAP) to sn-glycerol 3-phosphate (G3P), the key precursor for phospholipid synthesis. The chain is Glycerol-3-phosphate dehydrogenase [NAD(P)+] from Methylibium petroleiphilum (strain ATCC BAA-1232 / LMG 22953 / PM1).